Consider the following 858-residue polypeptide: Receptor-like protein kinase ANXUR2 (858 aa).

An N-terminal signal peptide occupies residues 1–27; the sequence is MNEKLRILFSFLCFFYVLLVSPSQSNG. Over 28–431 the chain is Extracellular; that stretch reads QDISLSCGAS…VKKDFQGDKR (404 aa). N-linked (GlcNAc...) asparagine glycosylation is found at asparagine 133, asparagine 293, asparagine 303, and asparagine 331. The chain crosses the membrane as a helical span at residues 432-452; sequence ITAFVIGSAGGVAAVLFCALC. The Cytoplasmic segment spans residues 453–858; that stretch reads FTMYQRKRKF…FSQIVNPKGR (406 aa). Residues 521–794 enclose the Protein kinase domain; that stretch reads FDESNVIGVG…GDVLWNLEFA (274 aa). Residues 527-535 and lysine 549 each bind ATP; that span reads IGVGGFGKV. Catalysis depends on aspartate 645, which acts as the Proton acceptor. The interval 800–858 is disordered; it reads TADGSRHRTPSNGGGSVDLGGGGGGVTVNISAGESDLGDDLSSEENSGIFSQIVNPKGR. Over residues 811 to 825 the composition is skewed to gly residues; the sequence is NGGGSVDLGGGGGGV. Polar residues predominate over residues 843–858; it reads EENSGIFSQIVNPKGR.

The protein belongs to the protein kinase superfamily. Ser/Thr protein kinase family. Expressed in pollen, but not in pistils or seedlings.

It localises to the cell membrane. It catalyses the reaction L-seryl-[protein] + ATP = O-phospho-L-seryl-[protein] + ADP + H(+). The catalysed reaction is L-threonyl-[protein] + ATP = O-phospho-L-threonyl-[protein] + ADP + H(+). Functionally, receptor-like protein kinase that controls pollen tube behavior by directing rupture at proper timing to release the sperm cell. The sequence is that of Receptor-like protein kinase ANXUR2 (ANX2) from Arabidopsis thaliana (Mouse-ear cress).